We begin with the raw amino-acid sequence, 102 residues long: UPF0473 protein SAS1551 (102 aa).

The protein belongs to the UPF0473 family.

This is UPF0473 protein SAS1551 from Staphylococcus aureus (strain MSSA476).